Here is a 217-residue protein sequence, read N- to C-terminus: Histone H1C (217 aa).

2 stretches are compositionally biased toward low complexity: residues 1–11 (MAETASTETTP) and 28–45 (KKAAGGAKAKKPSGPSAS). Disordered regions lie at residues 1 to 45 (MAET…PSAS) and 123 to 217 (VAKK…AAKK). The region spanning 40–113 (SGPSASELIV…GASGSFKLNK (74 aa)) is the H15 domain. Basic residues-rich tracts occupy residues 123-151 (VAKKKLVAPKAKKPVTAKKKPKSPKKPKK) and 159-217 (SPKK…AAKK).

The protein belongs to the histone H1/H5 family.

It is found in the nucleus. It localises to the chromosome. Its function is as follows. Histones H1 are necessary for the condensation of nucleosome chains into higher-order structures. In Xenopus laevis (African clawed frog), this protein is Histone H1C.